The primary structure comprises 692 residues: MKNLLKKFFGQLQRIGKALMLPVAILPAAGILLTFGNAMHNEQILHFAPWMQHHYIQLISQIMEASGQVIFDNLPLLFAMGTALGLAGGDGVAGIAALVGYLIMSATMGKIAGITIDDIFSYADGAKTLGQSAKDPAHALVLGIPTLQTGVFGGIIIGALAAWCYNKFYNIQLPQFLGFFAGKRFVPIITSLVAIVTGIVLSFVWPPVQDGLNNLSNFLLGKNLALTTFIFGIIERSLIPFGLHHIFYAPFWFEFGHYVNESGNLVRGDQRIWMAQYQDGVPFTAGAFTTGKYPFMMFGLPAAAFAIYRQAKPERRKVVGGLMLSAALTSFLTGITEPLEFSFLFVAPILYVAHVILAGTSFLIMHLLHVQIGMTFSGGFIDYILYGLLSWDRSNALLVIPVGIAYALIYYFLFTFLIKKLNLKTPGREDKEVESKDVSVSELPFEVLEAMGNKDNIKHLDACITRLRVEVRDKGLVDVEKLKQLGASGVLEVGNNMQAIFGPKSDQIKHDMQQIMDGKITSPAETTVTEDGDVETAEIVAEGGAVIYAPITGEAVDLSEVPDKVFSAKMMGDGIAIKPETGEVVAPFDGKVKMIFPTKHAIGLESKDGIELLIHFGLETVKLDGEGFEILVKENDNIVLGQPLMKVDLNYIKEHADDTITPIIITNAGSANIEVLHTGKVEQGEKLLLVNN.

The PTS EIIC type-1 domain occupies 6–430 (KKFFGQLQRI…LNLKTPGRED (425 aa)). 10 helical membrane passes run 15–35 (IGKA…LLTF), 84–104 (LGLA…YLIM), 140–160 (LVLG…IGAL), 185–205 (FVPI…SFVW), 215–235 (LSNF…GIIE), 287–307 (AFTT…AFAI), 318–338 (VVGG…ITEP), 344–364 (LFVA…SFLI), 370–390 (VQIG…GLLS), and 398–418 (LVIP…TFLI). In terms of domain architecture, PTS EIIB type-1 spans 441-522 (SELPFEVLEA…QQIMDGKITS (82 aa)). The active-site Phosphocysteine intermediate; for EIIB activity is the Cys-463. The 105-residue stretch at 563 to 667 (DKVFSAKMMG…DTITPIIITN (105 aa)) folds into the PTS EIIA type-1 domain. Residue His-615 is the Tele-phosphohistidine intermediate; for EIIA activity of the active site.

The protein localises to the cell membrane. With respect to regulation, inhibited by methyl alpha-D-glucoside, methyl beta-D-glucoside, p-nitrophenyl alpha-D-glucoside, o-nitrophenyl beta-D-glucoside and salicin, but not by 2-deoxyglucose. Functionally, the phosphoenolpyruvate-dependent sugar phosphotransferase system (sugar PTS), a major carbohydrate active -transport system, catalyzes the phosphorylation of incoming sugar substrates concomitantly with their translocation across the cell membrane. This system is involved in alpha- and beta-glucoside transport. Can also transport glucose, but not galactose, fructose, mannose, cellobiose, sucrose, maltose, lactose, melibiose and trehalose, as well as N-acetylglucosamine. This Staphylococcus carnosus (strain TM300) protein is PTS system glucoside-specific EIICBA component (glcB).